The primary structure comprises 618 residues: Grainyhead-like protein 1 homolog (618 aa).

The tract at residues 1–91 (MTQEYDNKRP…EVEHPEPDHS (91 aa)) is transcription activation. Over residues 74–92 (RRSSTAKPEVEHPEPDHSK) the composition is skewed to basic and acidic residues. The interval 74 to 94 (RRSSTAKPEVEHPEPDHSKRN) is disordered. Phosphothreonine is present on Thr208. The 227-residue stretch at 248–474 (SGNNFEYTLE…DLDTQPVLFI (227 aa)) folds into the Grh/CP2 DB domain. 2 interaction with DNA regions span residues 380–389 (TDFSSQKGVK) and 427–430 (RKIR).

The protein belongs to the grh/CP2 family. Grainyhead subfamily. In terms of assembly, binds DNA as homodimer. Homodimer, also forms heterodimers with GRHL2 or GRHL3. Post-translationally, methylation at Arg-9 and Lys-116 may be involved in regulating transcriptional activation.

Its subcellular location is the nucleus. Transcription factor involved in epithelial development. Binds directly to the consensus DNA sequence 5'-AACCGGTT-3'. Important regulator of DSG1 in the context of hair anchorage and epidermal differentiation, participates in the maintenance of the skin barrier. There is no genetic interaction with GRHL3, nor functional cooperativity due to diverse target gene selectivity during epithelia development. May play a role in regulating glucose homeostasis and insulin signaling. The polypeptide is Grainyhead-like protein 1 homolog (GRHL1) (Pongo abelii (Sumatran orangutan)).